Reading from the N-terminus, the 117-residue chain is MDKKTARLRRAAKTRHKIHELGVVRLTVHRTPKHIYVQIIKPADGNVVASASTVESMLKQQLKNTGNKEAAITVGKTIAERAKAKGIAKVAFDRSGYKYHGRVKALADAAREGGLQF.

The protein belongs to the universal ribosomal protein uL18 family. In terms of assembly, part of the 50S ribosomal subunit; part of the 5S rRNA/L5/L18/L25 subcomplex. Contacts the 5S and 23S rRNAs.

Its function is as follows. This is one of the proteins that bind and probably mediate the attachment of the 5S RNA into the large ribosomal subunit, where it forms part of the central protuberance. This Nitrosococcus oceani (strain ATCC 19707 / BCRC 17464 / JCM 30415 / NCIMB 11848 / C-107) protein is Large ribosomal subunit protein uL18.